The following is a 584-amino-acid chain: Aspartate--tRNA(Asp/Asn) ligase (584 aa).

Residue Glu177 participates in L-aspartate binding. Residues Gln201–Lys204 form an aspartate region. Residue Arg223 coordinates L-aspartate. Residues Arg223–Glu225 and Gln232 contribute to the ATP site. Position 447 (His447) interacts with L-aspartate. Glu481 contributes to the ATP binding site. Arg488 is an L-aspartate binding site. Gly533 to Arg536 is an ATP binding site.

The protein belongs to the class-II aminoacyl-tRNA synthetase family. Type 1 subfamily. Homodimer.

The protein localises to the cytoplasm. It carries out the reaction tRNA(Asx) + L-aspartate + ATP = L-aspartyl-tRNA(Asx) + AMP + diphosphate. Aspartyl-tRNA synthetase with relaxed tRNA specificity since it is able to aspartylate not only its cognate tRNA(Asp) but also tRNA(Asn). Reaction proceeds in two steps: L-aspartate is first activated by ATP to form Asp-AMP and then transferred to the acceptor end of tRNA(Asp/Asn). This Chlamydia caviae (strain ATCC VR-813 / DSM 19441 / 03DC25 / GPIC) (Chlamydophila caviae) protein is Aspartate--tRNA(Asp/Asn) ligase.